A 690-amino-acid chain; its full sequence is MARSHPLEKYRNIGIMAHIDAGKTTTTERILYYTGKSYKIGEVHEGTATMDWMEQEQERGITITSAATTCFWNDHRINIIDTPGHVDFTIEVERSLRVLDGAVTAFDGVAGVEPQSETVWRQADKYRVPRMCYVNKLDRTGANFQRCVQMIKDRLGARPAVLYLPIGIESSFVGLVDLVENRAIVWLEESLGAKFEYRDIPDDMKDEAAVARQELIELAVEQDEAAMESYLEGNEPDVATLKALLRKGTLAFDFVPVLCGSSFKNKGVQPLLDAVVDYLPSPLDIPDVQGVKLDGETPDSRPAEDSAPMSALAFKIMNDPFVGSLTFARIYSGKLEKGTYLNSVKDKKEKIGRMLLMHANSREDIEEAYAGDIVALAGLKETTTGDTLCAPSAPIILERMEFPDPVIELSVEPKTKADQEKMGIALNRLAAEDPSFRVSSDHESGQTIIKGMGELHLEILVDRMKREFKVEANVGAPQVAYREYLKKPVELVYTHKKQSGGSGQFGEVKVQVKPGERGSGFVFVDEVKGGNIPREYIPSVEKGMRETAEGGSLIGFPIVDVEVHLIDGKYHDVDSSALAFEITGRGAMREAAQKAGITILEPIMKVEVVTPEDYLGDVIGDMNSRRGQIQGTDSRGNAQVVEAMVPLANMFGYVNQLRSFTQGRAQYSMQFSHYDEVPANVADEVKAKLA.

The 276-residue stretch at 8–283 (EKYRNIGIMA…AVVDYLPSPL (276 aa)) folds into the tr-type G domain. GTP-binding positions include 17 to 24 (AHIDAGKT), 81 to 85 (DTPGH), and 135 to 138 (NKLD).

The protein belongs to the TRAFAC class translation factor GTPase superfamily. Classic translation factor GTPase family. EF-G/EF-2 subfamily.

It is found in the cytoplasm. Functionally, catalyzes the GTP-dependent ribosomal translocation step during translation elongation. During this step, the ribosome changes from the pre-translocational (PRE) to the post-translocational (POST) state as the newly formed A-site-bound peptidyl-tRNA and P-site-bound deacylated tRNA move to the P and E sites, respectively. Catalyzes the coordinated movement of the two tRNA molecules, the mRNA and conformational changes in the ribosome. The protein is Elongation factor G of Rhizorhabdus wittichii (strain DSM 6014 / CCUG 31198 / JCM 15750 / NBRC 105917 / EY 4224 / RW1) (Sphingomonas wittichii).